We begin with the raw amino-acid sequence, 500 residues long: NAD(P)H-quinone oxidoreductase chain 4, chloroplastic (500 aa).

14 consecutive transmembrane segments (helical) span residues 3–23 (FFPW…LIFF), 37–57 (ICIC…HFQL), 87–107 (IGPI…AWPI), 113–130 (LFHF…GSFS), 134–154 (LLLF…LLSM), 167–187 (FILY…GMGL), 208–228 (ALEI…SPII), 242–262 (HYST…YGLV), 272–292 (AHSI…IYAA), 305–325 (IAYS…SITD), 330–350 (GAVL…FLAG), 386–406 (LALP…GIIT), 416–436 (ILIT…SLSM), and 462–482 (LFVS…PDFV).

Belongs to the complex I subunit 4 family.

The protein resides in the plastid. It is found in the chloroplast thylakoid membrane. It carries out the reaction a plastoquinone + NADH + (n+1) H(+)(in) = a plastoquinol + NAD(+) + n H(+)(out). The enzyme catalyses a plastoquinone + NADPH + (n+1) H(+)(in) = a plastoquinol + NADP(+) + n H(+)(out). The sequence is that of NAD(P)H-quinone oxidoreductase chain 4, chloroplastic from Platanus occidentalis (Sycamore).